The following is a 1192-amino-acid chain: Protein argonaute 13 (1192 aa).

Residues 183-296 (TVIQFVEEFL…LPMEVCKIVE (114 aa)) enclose the PAZ domain. Residues 472–770 (LLIVILLEVS…AASHAHCCIK (299 aa)) enclose the Piwi domain.

It belongs to the argonaute family. Ago subfamily.

Its function is as follows. Probably involved in the RNA silencing pathway. May bind to short RNAs such as microRNAs (miRNAs) or short interfering RNAs (siRNAs), and represses the translation of mRNAs which are complementary to them. This chain is Protein argonaute 13 (AGO13), found in Oryza sativa subsp. japonica (Rice).